A 766-amino-acid chain; its full sequence is MIWRRRAGAELSSLMALWEWIVLSLHCWVLAVAAVSDQHATSPFDWLLSDKGPFHRSQEYTDFVDRSRQGFSTRYKIYREFGRWKVNNLAVERRNFLGSPLPLAPEFFRNIRLLGRRPTLQQITENLIKKYGTHFLLSATLGGEESLTIFVDKRKLSKRPEGSETSTNSSSVTLETLHQLAASYFIDRDSTLRRLHHIQIASTAIKVTETRTGPLGCSNYDNLDSVSSVLVQSPENKIQLQGLQVLLPDYLQERFVQAALSYIACNSEGEFICKENDCWCLCGPKFPECNCPSMDIQAMEENLLRITETWKAYNSDFEDSDEFKFFMKRLPMNYFLNTSTIMHLWTMDSNFQRRYEQLENSMKQLFLKAHRIVHKLFSLSKRCHKQPLISLPRQRTSTYWLTRIQSFLYCNENGLLGSFSEETHSCTCPNDQVVCTAFLPCTVGDASACLTCAPDNRTRCGTCNTGYMLSQGLCKPEVAESTDHYIGFETDLQDLEMKYLLQKTDRRIEVHAIFISNDMRLNSWFDPSWRKRMLLTLKSNKYKSSLVHMILGLSLQICLTKNSTLEPVLAVYINPFGGSHSESWFMPVSESSFPDWERTKLDLPLQCYNWTLTLGNKWKTFFETVHIYLRSRIKANGPNSNESIYYEPLEFIDPSRNLGYMKINNIQVFGYSMHFDPEAIRDLILQLDYPYTQGSQDSALLQLLEIRDRVNKLSPPGQRRLDLFSCLLRHRLKLSTSEVVRIQSALQAFNAKLPNTVDYDTTKLCS.

The first 33 residues, 1-33 (MIWRRRAGAELSSLMALWEWIVLSLHCWVLAVA), serve as a signal peptide directing secretion. The MACPF domain maps to 74-264 (RYKIYREFGR…FVQAALSYIA (191 aa)). N-linked (GlcNAc...) asparagine glycans are attached at residues asparagine 168, asparagine 337, asparagine 456, asparagine 562, asparagine 609, and asparagine 641.

Belongs to the BRINP family. In terms of tissue distribution, expressed in olfactory bulb, cerebellum and neuronal layers in hippocampus.

It localises to the secreted. The protein resides in the mitochondrion. Functionally, inhibits neuronal cell proliferation by negative regulation of the cell cycle transition. Promotes pituitary gonadotrope cell proliferation, migration and invasion, when overexpressed. May play a role in cell pituitary tumor development. This Rattus norvegicus (Rat) protein is BMP/retinoic acid-inducible neural-specific protein 3 (Brinp3).